The primary structure comprises 409 residues: Ligand-gated cation channel ZACN (409 aa).

Positions 1 to 18 are cleaved as a signal peptide; it reads MAPRLLLLLLAFLRLGTT. The Extracellular segment spans residues 19-233; that stretch reads GPLVQGRGFR…LRLQNTALKA (215 aa). Asn55 and Asn99 each carry an N-linked (GlcNAc...) asparagine glycan. Cys157 and Cys171 are oxidised to a cystine. The chain crosses the membrane as a helical span at residues 234–254; sequence IIALLVPGEALLLADMCGGLL. At 255–265 the chain is on the cytoplasmic side; it reads PLRATERIAYK. A helical membrane pass occupies residues 266-286; it reads VTLLLGYLVFHSSLVQALPSS. Over 287-296 the chain is Extracellular; sequence SSCNPLLIYY. Residues 297 to 317 traverse the membrane as a helical segment; sequence FTVLLLLLFISTMETVLLAAL. The Cytoplasmic portion of the chain corresponds to 318–365; it reads QARGHLSARSSPIPTPRGEQQDHGDLGPHPEEAPGVKESRSWAEAADH. A disordered region spans residues 325–354; it reads ARSSPIPTPRGEQQDHGDLGPHPEEAPGVK. Over residues 336 to 354 the composition is skewed to basic and acidic residues; sequence EQQDHGDLGPHPEEAPGVK. Residues 366 to 386 form a helical membrane-spanning segment; sequence IFFLVYVVGVVCSQFFFIGFW. Residues 387–409 lie on the Extracellular side of the membrane; sequence MWATCKSDPAPGEAIPHGGQPRL.

Belongs to the ligand-gated ion channel (TC 1.A.9) family. In terms of processing, glycosylated.

Its subcellular location is the cell membrane. The catalysed reaction is Na(+)(in) = Na(+)(out). The enzyme catalyses K(+)(in) = K(+)(out). In terms of biological role, ligand-gated cation channel that allows the movement of sodium and potassium monoatomic cations across cell membranes when activated by zinc (Zn2+), copper (Cu2+), and changes in pH. Could also transport cesium. The polypeptide is Ligand-gated cation channel ZACN (Canis lupus familiaris (Dog)).